The sequence spans 28 residues: Potassium channel toxin alpha-KTx 9.7 (28 aa).

3 cysteine pairs are disulfide-bonded: C3/C19, C6/C24, and C10/C26.

In terms of tissue distribution, expressed by the venom gland.

The protein resides in the secreted. In terms of biological role, calcium channel activator. Rapidly and reversibly activates ryanodine receptor 1 (RYR1). This is Potassium channel toxin alpha-KTx 9.7 from Hottentotta judaicus (Black scorpion).